Reading from the N-terminus, the 436-residue chain is GTPase Der (436 aa).

EngA-type G domains follow at residues 4-167 (PVVA…KNIP) and 176-351 (VQFC…ENHS). Residues 10-17 (GRPNVGKS), 57-61 (DTGGI), 119-122 (NKLD), 182-189 (GRPNVGKS), 229-233 (DTAGM), and 294-297 (NKWD) contribute to the GTP site. One can recognise a KH-like domain in the interval 352–436 (LRVQTNVLND…PIKIFARARK (85 aa)).

This sequence belongs to the TRAFAC class TrmE-Era-EngA-EngB-Septin-like GTPase superfamily. EngA (Der) GTPase family. As to quaternary structure, associates with the 50S ribosomal subunit.

Functionally, GTPase that plays an essential role in the late steps of ribosome biogenesis. In Bacillus velezensis (strain DSM 23117 / BGSC 10A6 / LMG 26770 / FZB42) (Bacillus amyloliquefaciens subsp. plantarum), this protein is GTPase Der.